A 126-amino-acid chain; its full sequence is Fatty acid-binding protein, liver (126 aa).

An N-acetylalanine modification is found at A2.

Belongs to the calycin superfamily. Fatty-acid binding protein (FABP) family. As to expression, liver.

Its subcellular location is the cytoplasm. Its function is as follows. Binds free fatty acids and their coenzyme A derivatives, bilirubin, and some other small molecules in the cytoplasm. May be involved in intracellular lipid transport this L-FABP binds only one fatty acid/molecule. Has more affinity for trans-parinaric acid than for cis-parinaric acid. This is Fatty acid-binding protein, liver (fabp1) from Rhamdia sapo (South American catfish).